The chain runs to 338 residues: Anthranilate phosphoribosyltransferase (338 aa).

5-phospho-alpha-D-ribose 1-diphosphate contacts are provided by residues Gly-78, 81-82 (GD), Ser-86, 88-91 (NIST), 106-114 (KHGNKSVTS), and Ser-118. Anthranilate is bound at residue Gly-78. Position 90 (Ser-90) interacts with Mg(2+). Asn-109 contributes to the anthranilate binding site. Arg-163 contributes to the anthranilate binding site. Mg(2+)-binding residues include Asp-222 and Glu-223.

Belongs to the anthranilate phosphoribosyltransferase family. As to quaternary structure, homodimer. The cofactor is Mg(2+).

It catalyses the reaction N-(5-phospho-beta-D-ribosyl)anthranilate + diphosphate = 5-phospho-alpha-D-ribose 1-diphosphate + anthranilate. It functions in the pathway amino-acid biosynthesis; L-tryptophan biosynthesis; L-tryptophan from chorismate: step 2/5. Functionally, catalyzes the transfer of the phosphoribosyl group of 5-phosphorylribose-1-pyrophosphate (PRPP) to anthranilate to yield N-(5'-phosphoribosyl)-anthranilate (PRA). This Staphylococcus saprophyticus subsp. saprophyticus (strain ATCC 15305 / DSM 20229 / NCIMB 8711 / NCTC 7292 / S-41) protein is Anthranilate phosphoribosyltransferase.